Consider the following 460-residue polypeptide: Wadjet protein JetA (460 aa).

In terms of biological role, component of antiplasmid transformation system Wadjet type I, composed of JetA, JetB, JetC and JetD. Expression of Wadjet type I in B.subtilis (strain BEST7003) reduces the transformation efficiency of plasmid pHCMC05. This chain is Wadjet protein JetA, found in Bacillus cereus (strain Q1).